The chain runs to 204 residues: Small ribosomal subunit protein uS4 (204 aa).

A disordered region spans residues 20-46 (WGRPKSPINKREYGPGEHGQRRRKPSD). The span at 28–38 (NKREYGPGEHG) shows a compositional bias: basic and acidic residues. Positions 93–156 (TRLDAVVYRM…RQMPLILEAL (64 aa)) constitute an S4 RNA-binding domain.

Belongs to the universal ribosomal protein uS4 family. As to quaternary structure, part of the 30S ribosomal subunit. Contacts protein S5. The interaction surface between S4 and S5 is involved in control of translational fidelity.

One of the primary rRNA binding proteins, it binds directly to 16S rRNA where it nucleates assembly of the body of the 30S subunit. In terms of biological role, with S5 and S12 plays an important role in translational accuracy. This is Small ribosomal subunit protein uS4 from Rhodospirillum rubrum (strain ATCC 11170 / ATH 1.1.1 / DSM 467 / LMG 4362 / NCIMB 8255 / S1).